The following is a 414-amino-acid chain: Histidine--tRNA ligase (414 aa).

The protein belongs to the class-II aminoacyl-tRNA synthetase family. As to quaternary structure, homodimer.

It localises to the cytoplasm. It catalyses the reaction tRNA(His) + L-histidine + ATP = L-histidyl-tRNA(His) + AMP + diphosphate + H(+). The chain is Histidine--tRNA ligase from Solibacter usitatus (strain Ellin6076).